Here is a 518-residue protein sequence, read N- to C-terminus: Putative malate dehydrogenase 1B (518 aa).

This sequence belongs to the LDH/MDH superfamily. MDH type 2 family.

The protein is Putative malate dehydrogenase 1B (MDH1B) of Homo sapiens (Human).